A 669-amino-acid polypeptide reads, in one-letter code: Threonine--tRNA ligase (669 aa).

Residues 3–60 (DAQQITLLVDGEETKVTTGTTGAELFFERRDVVVARVNGELKDLDQELPEGAEVEGVT) enclose the TGS domain. The catalytic stretch occupies residues 260–566 (DHRKLGSELD…LTEHYAGAFP (307 aa)). Positions 365, 416, and 543 each coordinate Zn(2+).

It belongs to the class-II aminoacyl-tRNA synthetase family. As to quaternary structure, homodimer. Zn(2+) serves as cofactor.

It is found in the cytoplasm. It catalyses the reaction tRNA(Thr) + L-threonine + ATP = L-threonyl-tRNA(Thr) + AMP + diphosphate + H(+). Its function is as follows. Catalyzes the attachment of threonine to tRNA(Thr) in a two-step reaction: L-threonine is first activated by ATP to form Thr-AMP and then transferred to the acceptor end of tRNA(Thr). Also edits incorrectly charged L-seryl-tRNA(Thr). In Pseudarthrobacter chlorophenolicus (strain ATCC 700700 / DSM 12829 / CIP 107037 / JCM 12360 / KCTC 9906 / NCIMB 13794 / A6) (Arthrobacter chlorophenolicus), this protein is Threonine--tRNA ligase.